A 143-amino-acid polypeptide reads, in one-letter code: Large ribosomal subunit protein uL11 (143 aa).

It belongs to the universal ribosomal protein uL11 family. In terms of assembly, part of the ribosomal stalk of the 50S ribosomal subunit. Interacts with L10 and the large rRNA to form the base of the stalk. L10 forms an elongated spine to which L12 dimers bind in a sequential fashion forming a multimeric L10(L12)X complex. One or more lysine residues are methylated.

Forms part of the ribosomal stalk which helps the ribosome interact with GTP-bound translation factors. The sequence is that of Large ribosomal subunit protein uL11 from Ralstonia nicotianae (strain ATCC BAA-1114 / GMI1000) (Ralstonia solanacearum).